The sequence spans 287 residues: 5'-3' exonuclease (287 aa).

A 5'-3' exonuclease domain is found at 172 to 270 (IYPKEFIDLL…ITSEEITLKK (99 aa)).

Functionally, 5'-3' exonuclease acting preferentially on double-stranded DNA. The sequence is that of 5'-3' exonuclease (pol) from Buchnera aphidicola subsp. Schizaphis graminum (strain Sg).